The primary structure comprises 206 residues: Thymidylate kinase (206 aa).

14 to 21 (GGEGIGKS) serves as a coordination point for ATP.

This sequence belongs to the thymidylate kinase family.

It carries out the reaction dTMP + ATP = dTDP + ADP. Phosphorylation of dTMP to form dTDP in both de novo and salvage pathways of dTTP synthesis. This is Thymidylate kinase from Rickettsia bellii (strain OSU 85-389).